The following is a 937-amino-acid chain: Translation initiation factor IF-2 (937 aa).

The interval 47 to 352 (RAAFQTKATP…EMPQRKERPL (306 aa)) is disordered. Low complexity predominate over residues 52-68 (TKATPAASKPATPAAPK). The segment covering 97 to 116 (QHSNNRPQANANRNGQASNG) has biased composition (polar residues). Over residues 117–153 (QNRTNNARPNNNSARPNNSRPNTNSRPNNNSQNRSTS) the composition is skewed to low complexity. Residues 154–169 (ANHPMSLQEQISQANA) are compositionally biased toward polar residues. The segment covering 173–197 (RTQERIQQQREQREADEKKRREQAN) has biased composition (basic and acidic residues). A compositionally biased stretch (polar residues) spans 202-229 (TRNNASNNRPSNGKPTNGARPTTNSPRP). A compositionally biased stretch (low complexity) spans 240–269 (SSRPNNNNSARPNTTNNRPTNSRPATTPSR). A compositionally biased stretch (polar residues) spans 274–298 (QEMQQKMQANTVSASKPASNNTASK). Basic residues predominate over residues 322–331 (FNKKRKKTRK). Over residues 339–352 (AAKKEMPQRKERPL) the composition is skewed to basic and acidic residues. One can recognise a tr-type G domain in the interval 438–607 (SRPPVVTIMG…LLEADVLELK (170 aa)). A G1 region spans residues 447 to 454 (GHVDHGKT). 447–454 (GHVDHGKT) serves as a coordination point for GTP. The G2 stretch occupies residues 472–476 (GITQH). The segment at 493–496 (DTPG) is G3. Residues 493–497 (DTPGH) and 547–550 (NKID) contribute to the GTP site. Positions 547–550 (NKID) are G4. The G5 stretch occupies residues 583 to 585 (SAK).

It belongs to the TRAFAC class translation factor GTPase superfamily. Classic translation factor GTPase family. IF-2 subfamily.

The protein resides in the cytoplasm. Functionally, one of the essential components for the initiation of protein synthesis. Protects formylmethionyl-tRNA from spontaneous hydrolysis and promotes its binding to the 30S ribosomal subunits. Also involved in the hydrolysis of GTP during the formation of the 70S ribosomal complex. In Latilactobacillus sakei subsp. sakei (strain 23K) (Lactobacillus sakei subsp. sakei), this protein is Translation initiation factor IF-2.